The following is a 243-amino-acid chain: MGTPETSREPCPDRILDDIGGAFGMGAVGGSAFHFIKGTYNSPKGSRFVGGTQSVSMNAPRTGGSFAVWGGLFSTFDCTMVYLRQKEDPWNSIIAGAATGGFLSMRQGAGAASRSAIFGGVLLALIEGAGIMLNKVLAQPQNMMMEDPGMQGMPGMQGMQGMPGMPGMQGMPGMQGMQMGQMQSQAQIRSESQNQNTASSSSSSSWFGGLFDKKKEEVQPGSESKTEVLESFDAPPVPSFEFK.

Helical transmembrane passes span 19 to 36 (IGGA…FHFI), 66 to 83 (FAVW…MVYL), 90 to 109 (WNSI…RQGA), and 115 to 137 (SAIF…NKVL). A run of 10 repeats spans residues 149-151 (GMQ), 152-154 (GMP), 155-157 (GMQ), 158-160 (GMQ), 161-163 (GMP), 164-166 (GMP), 167-169 (GMQ), 170-172 (GMP), 173-175 (GMQ), and 176-178 (GMQ). The segment at 149 to 178 (GMQGMPGMQGMQGMPGMPGMQGMPGMQGMQ) is 10 X approximate repeats GMQ/P. A compositionally biased stretch (low complexity) spans 166 to 183 (PGMQGMPGMQGMQMGQMQ). Residues 166 to 243 (PGMQGMPGMQ…APPVPSFEFK (78 aa)) are disordered. Polar residues predominate over residues 184–198 (SQAQIRSESQNQNTA). Positions 211 to 228 (FDKKKEEVQPGSESKTEV) are enriched in basic and acidic residues.

Belongs to the Tim17/Tim22/Tim23 family. In terms of assembly, component of the TIM17:23 complex at least composed of TIM23, TIM17 and TIM50. The complex interacts with the TIM44 component of the PAM complex. Interacts with TIM23-2. In terms of tissue distribution, expressed in roots, flowers, leaves and young cotyledons.

The protein localises to the mitochondrion inner membrane. It is found in the mitochondrion outer membrane. Functionally, essential component of the TIM17:23 complex, a complex that mediates the translocation of transit peptide-containing proteins across the mitochondrial inner membrane. Links the inner and outer membranes. This chain is Mitochondrial import inner membrane translocase subunit TIM17-2 (TIM17-2), found in Arabidopsis thaliana (Mouse-ear cress).